A 440-amino-acid chain; its full sequence is MSEFSQTVPELVAWARKNDFSITLPTERLAFLMAIATLNGERLDGEMSEGELVDAFRHVSKGFEQTTETVAVRANNAINDMVRQRLLNRFTSEMADGNAIYRLTPLGIGITDYYIRQREFSTLRLSMQLSIVAQELQRAAEAAEEGGDEFHWHRNVFAPLKYSVAEIFDSIDMTQRLMDEQQHSVKEDIAALLNQDWRAAIASCEMLLSETSGTLRELQDTLEAAGDKLQANLLRIQEATIGNAGLDLVDKLVFDLQSKLDRIISWGQQAIDLWIGYDRHVHKFIRTAIDMDKNRVFAQRLRQSVQNYFDNPWALTYANADRLLDMRDEELSLRSEEVTGELPPDLEFEEFNAIREQLAAMIEQALLVYQQQKLPLNLGEVMRDYLAQYPRARHFDVARILVDQAVRLGVAEADFSGLPAEWLAINDYGAKVQAHVINKY.

The leucine-zipper stretch occupies residues 208 to 236 (LSETSGTLRELQDTLEAAGDKLQANLLRI).

The protein belongs to the MukF family. In terms of assembly, interacts, and probably forms a ternary complex, with MukE and MukB via its C-terminal region. The complex formation is stimulated by calcium or magnesium. It is required for an interaction between MukE and MukB.

It localises to the cytoplasm. Its subcellular location is the nucleoid. Involved in chromosome condensation, segregation and cell cycle progression. May participate in facilitating chromosome segregation by condensation DNA from both sides of a centrally located replisome during cell division. Not required for mini-F plasmid partitioning. Probably acts via its interaction with MukB and MukE. Overexpression results in anucleate cells. It has a calcium binding activity. The protein is Chromosome partition protein MukF of Yersinia enterocolitica serotype O:8 / biotype 1B (strain NCTC 13174 / 8081).